The chain runs to 227 residues: Small ribosomal subunit protein uS5 (227 aa).

The interval 1 to 22 is disordered; it reads MSKRSNRSNNKNNTNKFNIENW. Residues 7–18 are compositionally biased toward low complexity; it reads RSNNKNNTNKFN. Residues 63 to 126 enclose the S5 DRBM domain; it reads LEEEVMDVNL…DAAKYNLIKV (64 aa).

This sequence belongs to the universal ribosomal protein uS5 family. In terms of assembly, part of the 30S ribosomal subunit. Contacts protein S4.

Its function is as follows. With S4 and S12 plays an important role in translational accuracy. The sequence is that of Small ribosomal subunit protein uS5 from Methanosphaera stadtmanae (strain ATCC 43021 / DSM 3091 / JCM 11832 / MCB-3).